A 419-amino-acid chain; its full sequence is Maltoporin 2 (419 aa).

The first 23 residues, 1–23, serve as a signal peptide directing secretion; that stretch reads MKTSLRTLSVALAAALVSPSVLA.

This sequence belongs to the porin LamB (TC 1.B.3) family. As to quaternary structure, homotrimer formed of three 18-stranded antiparallel beta-barrels, containing three independent channels.

Its subcellular location is the cell outer membrane. It catalyses the reaction beta-maltose(in) = beta-maltose(out). Functionally, involved in the transport of maltose and maltodextrins. In Yersinia pseudotuberculosis serotype O:1b (strain IP 31758), this protein is Maltoporin 2.